The primary structure comprises 133 residues: Fluoride-specific ion channel FluC (133 aa).

A run of 4 helical transmembrane segments spans residues Leu12–Ile32, Trp41–Leu61, Ile76–Phe96, and Met104–Ala124. Na(+)-binding residues include Gly81 and Thr84.

The protein belongs to the fluoride channel Fluc/FEX (TC 1.A.43) family.

Its subcellular location is the cell inner membrane. The catalysed reaction is fluoride(in) = fluoride(out). Na(+) is not transported, but it plays an essential structural role and its presence is essential for fluoride channel function. Its function is as follows. Fluoride-specific ion channel. Important for reducing fluoride concentration in the cell, thus reducing its toxicity. The polypeptide is Fluoride-specific ion channel FluC (Xanthomonas euvesicatoria pv. vesicatoria (strain 85-10) (Xanthomonas campestris pv. vesicatoria)).